The following is a 225-amino-acid chain: mRNA-decapping protein D10 (225 aa).

Residues 35-218 enclose the Nudix hydrolase domain; it reads AKYPLSVIGI…NVIKYIINAV (184 aa). A Nudix box motif is present at residues 116 to 137; sequence GKIKDLESITNCLVREIKEELN. Glutamate 122 provides a ligand contact to Mg(2+). Residue glutamate 131 is the Nucleophile of the active site. Glutamate 135 contacts Mn(2+). Aspartate 157 lines the Mg(2+) pocket.

Belongs to the Nudix hydrolase family. It depends on Mg(2+) as a cofactor. Requires Mn(2+) as cofactor.

In terms of biological role, decapping enzyme required for the removal of the 5'-end m7GpppN cap tethered to viral and host mRNAs to allow their decay in cells. May therefore accelerate viral and cellular mRNA turnover to eliminate competing host mRNAs and allow stage-specific synthesis of viral proteins. Acceleration of the turnover of cellular transcripts may even promote the shutoff of host protein synthesis. In Fowlpox virus (strain NVSL) (FPV), this protein is mRNA-decapping protein D10.